The sequence spans 308 residues: Membrane protein insertase YidC 1 (308 aa).

Positions 1-22 (MKSIKRFALSAMGAAMLLVLTG) are cleaved as a signal peptide. A lipid anchor (N-palmitoyl cysteine) is attached at Cys23. Cys23 carries S-diacylglycerol cysteine lipidation. Helical transmembrane passes span 60-80 (FGVAIIIVTIIVRLIILPLGI), 135-155 (FGGVGCFPILLQMPFFSAIYF), 168-188 (YLGIPLGSPSMILVACAGVLY), 211-225 (MIYMSPLMIVVFSLF), and 230-252 (VTLYWVVGGFMMILQQFIVNYIV). A disordered region spans residues 263–308 (ELAKNPSKASAFSTPSGRKDVTPEQPTAITSKKKHKNRNAGKQRSR). Residues 269–278 (SKASAFSTPS) show a composition bias toward polar residues. Residues 293–308 (SKKKHKNRNAGKQRSR) are compositionally biased toward basic residues.

Belongs to the OXA1/ALB3/YidC family. Type 2 subfamily.

The protein resides in the cell membrane. Required for the insertion and/or proper folding and/or complex formation of integral membrane proteins into the membrane. Involved in integration of membrane proteins that insert both dependently and independently of the Sec translocase complex, as well as at least some lipoproteins. The polypeptide is Membrane protein insertase YidC 1 (Streptococcus pneumoniae (strain ATCC BAA-255 / R6)).